A 518-amino-acid chain; its full sequence is Endoglucanase 18 (518 aa).

The Cytoplasmic segment spans residues 1-35; the sequence is MANCVRCCCWLLVLMLMALAITAAVVFVRYKNGEG. Residues 36–56 traverse the membrane as a helical segment; sequence VFPFPGVPGAVDHKYADALAV. The Extracellular portion of the chain corresponds to 57-518; that stretch reads ALQFFQVQKS…STSSLARSLS (462 aa). A glycan (N-linked (GlcNAc...) asparagine) is linked at asparagine 71. Aspartate 101 (nucleophile) is an active-site residue. N-linked (GlcNAc...) asparagine glycans are attached at residues asparagine 214, asparagine 251, and asparagine 272. Residue histidine 436 is part of the active site. Residue asparagine 477 is glycosylated (N-linked (GlcNAc...) asparagine). Active-site residues include aspartate 482 and glutamate 491.

Belongs to the glycosyl hydrolase 9 (cellulase E) family.

The protein localises to the membrane. The catalysed reaction is Endohydrolysis of (1-&gt;4)-beta-D-glucosidic linkages in cellulose, lichenin and cereal beta-D-glucans.. The protein is Endoglucanase 18 of Oryza sativa subsp. japonica (Rice).